Consider the following 96-residue polypeptide: Putative pterin-4-alpha-carbinolamine dehydratase (96 aa).

Belongs to the pterin-4-alpha-carbinolamine dehydratase family.

The enzyme catalyses (4aS,6R)-4a-hydroxy-L-erythro-5,6,7,8-tetrahydrobiopterin = (6R)-L-erythro-6,7-dihydrobiopterin + H2O. This Synechocystis sp. (strain ATCC 27184 / PCC 6803 / Kazusa) protein is Putative pterin-4-alpha-carbinolamine dehydratase.